A 179-amino-acid chain; its full sequence is Monothiol glutaredoxin-S12, chloroplastic (179 aa).

The transit peptide at 1–61 (MVAATVNLAN…WPPLRCSSVK (61 aa)) directs the protein to the chloroplast. Residue alanine 62 is modified to N-acetylalanine. Positions 75-176 (EETVKTTVAE…AILAEANGKN (102 aa)) constitute a Glutaredoxin domain. [2Fe-2S] cluster is bound at residue cysteine 95.

This sequence belongs to the glutaredoxin family. CPYC subfamily.

Its subcellular location is the plastid. It localises to the chloroplast. Functionally, may only reduce GSH-thiol disulfides, but not protein disulfides. This is Monothiol glutaredoxin-S12, chloroplastic (GRXS12) from Arabidopsis thaliana (Mouse-ear cress).